A 445-amino-acid polypeptide reads, in one-letter code: D-serine transporter DsdX (445 aa).

12 consecutive transmembrane segments (helical) span residues 5-25, 29-49, 57-77, 106-126, 140-160, 178-198, 224-244, 265-285, 302-322, 343-363, 385-405, and 425-445; these read IWVVSTLLISIVLIVLTIVKF, PFLALLLASFFVGTMMGMGPL, SGIGGTLGFLAAVIGLGTILG, VLVGLICGITLFVEVGVVLLI, LLKLAIPLCTALMAVHCVVPP, VIVYGLLVGLMASLIGGPLFL, TLPSLGATLFTVLLPIALMLV, IGNPITATFIAVFVAYYVLGI, FGSIANILLIIGAGGAFNAIL, ILLAWLVALILHAAVGSATVA, IIAIAIGSGAIGCTIVTDSLF, and TATFIASVIALAGTFLLSFII.

This sequence belongs to the GntP permease family.

It is found in the cell inner membrane. With respect to regulation, uptake of D-serine is inhibited by carbonyl cyanide m-chlorophenylhydrazone (CCCP), and at high concentrations of D-threonine, stimulated by D-cycloserine and not affected by D-alanine or glycine. In terms of biological role, protein that allows transport of D-serine across the inner membrane, does not transport D-alanine nor probably glycine. Is probably a H(+) symporter, as CCCP inhibits transport. Transports D-serine more efficiently than CycA. The protein is D-serine transporter DsdX (dsdX) of Escherichia coli O6:H1 (strain CFT073 / ATCC 700928 / UPEC).